Here is a 433-residue protein sequence, read N- to C-terminus: Protein FAM98B (433 aa).

A disordered region spans residues Gly-303–Tyr-433. Basic and acidic residues predominate over residues Val-305–Glu-314. Gly residues predominate over residues Gly-331 to Tyr-433.

Belongs to the FAM98 family. As to quaternary structure, homodimer. Component of the tRNA-splicing ligase complex. Interacts with FAM98A. Expressed strongly in colorectal cancer tissues compared to wild-type colon samples (at protein level). Expressed strongly in colorectal cancer tissues compared to wild-type colon samples.

The protein localises to the nucleus. Its subcellular location is the cytoplasm. In terms of biological role, positively stimulates PRMT1-induced protein arginine dimethylated arginine methylation. The sequence is that of Protein FAM98B (FAM98B) from Homo sapiens (Human).